The primary structure comprises 212 residues: Mediator of RNA polymerase II transcription subunit 20 (212 aa).

It belongs to the Mediator complex subunit 20 family. In terms of assembly, interacts with PPARG. Component of the Mediator complex, which is composed of MED1, MED4, MED6, MED7, MED8, MED9, MED10, MED11, MED12, MED13, MED13L, MED14, MED15, MED16, MED17, MED18, MED19, MED20, MED21, MED22, MED23, MED24, MED25, MED26, MED27, MED29, MED30, MED31, CCNC, CDK8 and CDC2L6/CDK11. The MED12, MED13, CCNC and CDK8 subunits form a distinct module termed the CDK8 module. Mediator containing the CDK8 module is less active than Mediator lacking this module in supporting transcriptional activation. Individual preparations of the Mediator complex lacking one or more distinct subunits have been variously termed ARC, CRSP, DRIP, PC2, SMCC and TRAP.

Its subcellular location is the nucleus. Its function is as follows. Component of the Mediator complex, a coactivator involved in the regulated transcription of nearly all RNA polymerase II-dependent genes. Mediator functions as a bridge to convey information from gene-specific regulatory proteins to the basal RNA polymerase II transcription machinery. Mediator is recruited to promoters by direct interactions with regulatory proteins and serves as a scaffold for the assembly of a functional preinitiation complex with RNA polymerase II and the general transcription factors. This is Mediator of RNA polymerase II transcription subunit 20 (MED20) from Homo sapiens (Human).